The primary structure comprises 457 residues: MTPRSRGPRRRPLDPARRAAFETLRAVSARDAYANLVLPALLAQRGIGGRDAAFATELTYGTCRARGLLDAVIGAAAERSPQAIDPVLLDLLRLGTYQLLRTRVDAHAAVSTTVEQAGIEFDSARAGFVNGVLRTIAGRDERSWVGELAPDAQNDPIGHAAFVHAHPRWIAQAFADALGAAVGELEAVLASDDERPAVHLAARPGVLTAGELARAVRGTVGRYSPFAVYLPRGDPGRLAPVRDGQALVQDEGSQLVARALTLAPVDGDTGRWLDLCAGPGGKTALLAGLGLQCAARVTAVEPSPHRADLVAQNTRGLPVELLRVDGRHTDLDPGFDRVLVDAPCTGLGALRRRPEARWRRQPADVAALAKLQRELLSAAIALTRPGGVVLYATCSPHLAETVGAVADALRRHPVHALDTRPLFEPVIAGLGEGPHVQLWPHRHGTDAMFAAALRRLT.

S-adenosyl-L-methionine-binding positions include 276-282 (CAGPGGK), Glu-301, Asp-325, and Asp-341. Cys-394 functions as the Nucleophile in the catalytic mechanism.

It belongs to the class I-like SAM-binding methyltransferase superfamily. RsmB/NOP family.

Its function is as follows. May act as RNA methyltransferase. This is Putative methyltransferase MT1451 from Mycobacterium tuberculosis (strain CDC 1551 / Oshkosh).